A 309-amino-acid chain; its full sequence is Homoserine kinase (309 aa).

91–101 (PIGSGLGSSAC) is a binding site for ATP.

The protein belongs to the GHMP kinase family. Homoserine kinase subfamily.

It localises to the cytoplasm. It carries out the reaction L-homoserine + ATP = O-phospho-L-homoserine + ADP + H(+). The protein operates within amino-acid biosynthesis; L-threonine biosynthesis; L-threonine from L-aspartate: step 4/5. Functionally, catalyzes the ATP-dependent phosphorylation of L-homoserine to L-homoserine phosphate. This Buchnera aphidicola subsp. Acyrthosiphon pisum (strain APS) (Acyrthosiphon pisum symbiotic bacterium) protein is Homoserine kinase.